The chain runs to 448 residues: Packaging protein 1 (448 aa).

Residues 1–76 (METKGRRSAA…SQPAKRGGLL (76 aa)) are disordered. The span at 22–31 (PRKRPTRRAP) shows a compositional bias: basic residues. The segment covering 56-67 (RPSSDSLLQEPS) has biased composition (polar residues). Residue 171–178 (GPTGCGKS) participates in ATP binding. The interval 440–448 (RAYRARKIK) is DNA-binding.

It belongs to the adenoviridae packaging protein 1 family. Homodimer. Part of a genome packaging complex composed of packaging proteins 1, 2 and 3; this complex specifically binds to the packaging sequence on the left end of viral genomic DNA and performs packaging of the viral genome. Interacts with protein 33K.

The protein resides in the virion. The protein localises to the host nucleus. It localises to the host nucleoplasm. Its subcellular location is the host nucleolus. Component of the packaging machinery which encapsidates the viral DNA into preformed capsids and transcriptional activator of the viral major late promoter (MLP). Binds, along with packaging proteins 2 and 3, to the specific packaging sequence on the left end of viral genomic DNA and displays ATPase activity thereby providing the power stroke of the packaging machinery. The activity of packaging protein IVa2 is stimulated by protein 33K which acts as a terminase. May be the protein that pumps DNA into the capsid powered by ATP hydrolysis. Specifically binds to the 5'-CG-3' nucleotides of the repeats making up the packaging sequence. Component of the DEF-A and DEF-B transcription factors that bind downstream elements of the major late promoter (MLP), and stimulate transcription from the MLP after initiation of viral DNA replication. DEF-A is a heterodimer packaging proteins 1 and 2 and DEF-B is a homodimer of packaging protein 1. This is Packaging protein 1 from Human adenovirus B serotype 7 (HAdV-7).